A 367-amino-acid chain; its full sequence is Phospho-N-acetylmuramoyl-pentapeptide-transferase (367 aa).

A run of 10 helical transmembrane segments spans residues 34-54, 78-98, 101-121, 135-155, 175-195, 206-226, 246-266, 270-290, 295-315, and 344-364; these read GAVV…IDHL, TPTM…VLWA, LNPY…VGFY, FGSK…CYAL, TVLH…VGAG, GLAI…AYLA, LAVL…FNAP, IFMG…IAVA, IVLA…IVQV, and QIVI…LSTL.

Belongs to the glycosyltransferase 4 family. MraY subfamily. Mg(2+) is required as a cofactor.

Its subcellular location is the cell inner membrane. It catalyses the reaction UDP-N-acetyl-alpha-D-muramoyl-L-alanyl-gamma-D-glutamyl-meso-2,6-diaminopimeloyl-D-alanyl-D-alanine + di-trans,octa-cis-undecaprenyl phosphate = di-trans,octa-cis-undecaprenyl diphospho-N-acetyl-alpha-D-muramoyl-L-alanyl-D-glutamyl-meso-2,6-diaminopimeloyl-D-alanyl-D-alanine + UMP. It functions in the pathway cell wall biogenesis; peptidoglycan biosynthesis. Functionally, catalyzes the initial step of the lipid cycle reactions in the biosynthesis of the cell wall peptidoglycan: transfers peptidoglycan precursor phospho-MurNAc-pentapeptide from UDP-MurNAc-pentapeptide onto the lipid carrier undecaprenyl phosphate, yielding undecaprenyl-pyrophosphoryl-MurNAc-pentapeptide, known as lipid I. This Bradyrhizobium diazoefficiens (strain JCM 10833 / BCRC 13528 / IAM 13628 / NBRC 14792 / USDA 110) protein is Phospho-N-acetylmuramoyl-pentapeptide-transferase.